The following is a 122-amino-acid chain: Cytochrome c-556 (122 aa).

4 residues coordinate heme: Met11, Cys111, Cys114, and His115. Residues Met11, Cys111, Cys114, and His115 each coordinate heme c.

Monomer. Binds 1 heme c group covalently per subunit.

Its function is as follows. Low-spin monoheme cytochrome c. The polypeptide is Cytochrome c-556 (Agrobacterium tumefaciens (strain II Chrys)).